We begin with the raw amino-acid sequence, 614 residues long: Methionine--tRNA ligase (614 aa).

Residues 11–21 (PYTNGPRHIGH) carry the 'HIGH' region motif. Zn(2+)-binding residues include cysteine 143, cysteine 146, cysteine 156, and cysteine 159. The short motif at 359 to 363 (QFSTS) is the 'KMSKS' region element. Position 362 (threonine 362) interacts with ATP.

Belongs to the class-I aminoacyl-tRNA synthetase family. MetG type 1 subfamily. In terms of assembly, monomer. The cofactor is Zn(2+).

The protein resides in the cytoplasm. The enzyme catalyses tRNA(Met) + L-methionine + ATP = L-methionyl-tRNA(Met) + AMP + diphosphate. In terms of biological role, is required not only for elongation of protein synthesis but also for the initiation of all mRNA translation through initiator tRNA(fMet) aminoacylation. The sequence is that of Methionine--tRNA ligase from Beutenbergia cavernae (strain ATCC BAA-8 / DSM 12333 / CCUG 43141 / JCM 11478 / NBRC 16432 / NCIMB 13614 / HKI 0122).